The sequence spans 702 residues: Ribosomal RNA large subunit methyltransferase K/L (702 aa).

The region spanning 43–154 (LVYQSLMWSR…KETASIALDL (112 aa)) is the THUMP domain.

The protein belongs to the methyltransferase superfamily. RlmKL family.

It localises to the cytoplasm. The catalysed reaction is guanosine(2445) in 23S rRNA + S-adenosyl-L-methionine = N(2)-methylguanosine(2445) in 23S rRNA + S-adenosyl-L-homocysteine + H(+). The enzyme catalyses guanosine(2069) in 23S rRNA + S-adenosyl-L-methionine = N(2)-methylguanosine(2069) in 23S rRNA + S-adenosyl-L-homocysteine + H(+). Its function is as follows. Specifically methylates the guanine in position 2445 (m2G2445) and the guanine in position 2069 (m7G2069) of 23S rRNA. The protein is Ribosomal RNA large subunit methyltransferase K/L of Shigella boydii serotype 18 (strain CDC 3083-94 / BS512).